A 144-amino-acid polypeptide reads, in one-letter code: Putative pre-16S rRNA nuclease (144 aa).

This sequence belongs to the YqgF nuclease family.

It localises to the cytoplasm. In terms of biological role, could be a nuclease involved in processing of the 5'-end of pre-16S rRNA. The polypeptide is Putative pre-16S rRNA nuclease (Mycoplasma mobile (strain ATCC 43663 / 163K / NCTC 11711) (Mesomycoplasma mobile)).